A 253-amino-acid chain; its full sequence is Phycocyanobilin:ferredoxin oxidoreductase (253 aa).

Belongs to the HY2 family.

The catalysed reaction is (2R,3Z)-phycocyanobilin + 4 oxidized [2Fe-2S]-[ferredoxin] = biliverdin IXalpha + 4 reduced [2Fe-2S]-[ferredoxin] + 4 H(+). In terms of biological role, catalyzes the four-electron reduction of biliverdin IX-alpha (2-electron reduction at both the A and D rings); the reaction proceeds via an isolatable 2-electron intermediate, 181,182-dihydrobiliverdin. In Gloeobacter violaceus (strain ATCC 29082 / PCC 7421), this protein is Phycocyanobilin:ferredoxin oxidoreductase (pcyA).